The chain runs to 237 residues: Large ribosomal subunit protein bL25 (237 aa).

Positions 1–104 (MELTAKPRTP…SVPVHTTGRS (104 aa)) are N-terminal domain. A middle domain region spans residues 105–189 (QGEVQGGLVD…ELEAEVQAAQ (85 aa)). The interval 190–237 (VAGLVAAGELSEEAAEAVLEGDASLEEVKAEASEDNAGTDSEDNSDAQ) is C-terminal domain. Residues 205–237 (EAVLEGDASLEEVKAEASEDNAGTDSEDNSDAQ) form a disordered region.

This sequence belongs to the bacterial ribosomal protein bL25 family. CTC subfamily. As to quaternary structure, part of the 50S ribosomal subunit. Contacts proteins L11 and L16, the A site tRNA, and the 5S and 23S rRNAs.

Its function is as follows. This is one of 3 proteins that mediate the attachment of the 5S rRNA onto the large ribosomal subunit. This protein has three domains. The N-terminal one is bound on the solvent face, the middle domain fills the space between the 5S rRNA and the L11 arm contacting the 23S rRNA while the C-terminal domain is on the edge of the intersubunit interface and contacts the A site. The protein conformation changes upon binding of a tRNA mimic to the A site, although the mimic does not interact directly with CTC itself, consistent with CTCs presumed role in moderating A site binding. The sequence is that of Large ribosomal subunit protein bL25 (rplY) from Deinococcus radiodurans (strain ATCC 13939 / DSM 20539 / JCM 16871 / CCUG 27074 / LMG 4051 / NBRC 15346 / NCIMB 9279 / VKM B-1422 / R1).